A 428-amino-acid chain; its full sequence is MKKKLNLCPKGTYDFFGQGAKIFIDVRKVFFNQAKKFNFSYIETPIFEYANIFLTTNQIADIVSKELYKFFDKSGRELALRPEGTAPIMRSVAQHKLFQTEKKFFYFGPMFRYENPQKGRFRQFYQAGFEIINYKKDSLEFQILEIILLIKSIFKDLGINEYEIKINFLSNLTTRNIYKKNLAQYFEKFSDKLEPISKIRIKKNPLRILDDKIEQEKEFVKLAPKINTFWTMEDKNIFNRITSILEEFKIIYKVDYNLVRGLDYYDDFVFEFIDTSQTLGTKLALVGGGCYNNLPTKFGLNNFKSIGMAFGIERLIEIIKSKKNIKEQNLDFFLLSFTDKEILLNFKLAKILRKENFLVDLNKTPFSVSKGFQLAKKSGAKFVFFFEKNQAKNYISLKNLQTGKNEQILYTEINFEYLNSIIKASENA.

Belongs to the class-II aminoacyl-tRNA synthetase family. As to quaternary structure, homodimer.

The protein resides in the cytoplasm. The catalysed reaction is tRNA(His) + L-histidine + ATP = L-histidyl-tRNA(His) + AMP + diphosphate + H(+). This Mesomycoplasma hyopneumoniae (strain 232) (Mycoplasma hyopneumoniae) protein is Histidine--tRNA ligase.